The chain runs to 402 residues: Type II NADH:quinone oxidoreductase (402 aa).

FAD-binding positions include 12 to 16 (GAGYA), 39 to 40 (NK), and valine 83. Glutamate 172 is a catalytic residue. FAD contacts are provided by residues aspartate 302, 319 to 320 (AQ), and lysine 379.

It belongs to the NADH dehydrogenase family. Requires FAD as cofactor.

Its subcellular location is the cell membrane. The catalysed reaction is a quinone + NADH + H(+) = a quinol + NAD(+). Alternative, nonproton pumping NADH:quinone oxidoreductase that delivers electrons to the respiratory chain by oxidation of NADH and reduction of quinones, and contributes to the regeneration of NAD(+). The protein is Type II NADH:quinone oxidoreductase of Staphylococcus epidermidis (strain ATCC 12228 / FDA PCI 1200).